A 173-amino-acid chain; its full sequence is Large ribosomal subunit protein uL10 (173 aa).

Belongs to the universal ribosomal protein uL10 family. Part of the ribosomal stalk of the 50S ribosomal subunit. The N-terminus interacts with L11 and the large rRNA to form the base of the stalk. The C-terminus forms an elongated spine to which L12 dimers bind in a sequential fashion forming a multimeric L10(L12)X complex.

In terms of biological role, forms part of the ribosomal stalk, playing a central role in the interaction of the ribosome with GTP-bound translation factors. This is Large ribosomal subunit protein uL10 from Chlorobaculum parvum (strain DSM 263 / NCIMB 8327) (Chlorobium vibrioforme subsp. thiosulfatophilum).